The primary structure comprises 185 residues: Ribosome-recycling factor (185 aa).

Basic and acidic residues predominate over residues 138 to 179 (TLKRQEKNGDITEDEQRSLEKQVQKVTDDATKEIDKLADQKS). The segment at 138–185 (TLKRQEKNGDITEDEQRSLEKQVQKVTDDATKEIDKLADQKSQEITQG) is disordered.

Belongs to the RRF family.

The protein resides in the cytoplasm. Its function is as follows. Responsible for the release of ribosomes from messenger RNA at the termination of protein biosynthesis. May increase the efficiency of translation by recycling ribosomes from one round of translation to another. The chain is Ribosome-recycling factor from Lactobacillus gasseri (strain ATCC 33323 / DSM 20243 / BCRC 14619 / CIP 102991 / JCM 1131 / KCTC 3163 / NCIMB 11718 / NCTC 13722 / AM63).